Consider the following 491-residue polypeptide: UDP-N-acetylmuramate--L-alanine ligase (491 aa).

126-132 (GTHGKTT) contacts ATP.

This sequence belongs to the MurCDEF family.

The protein resides in the cytoplasm. The enzyme catalyses UDP-N-acetyl-alpha-D-muramate + L-alanine + ATP = UDP-N-acetyl-alpha-D-muramoyl-L-alanine + ADP + phosphate + H(+). It participates in cell wall biogenesis; peptidoglycan biosynthesis. Its function is as follows. Cell wall formation. This chain is UDP-N-acetylmuramate--L-alanine ligase, found in Salmonella agona (strain SL483).